Consider the following 484-residue polypeptide: Glutamate--tRNA ligase (484 aa).

Positions 11 to 21 (PSPTGYLHIGN) match the 'HIGH' region motif. The 'KMSKS' region signature appears at 252–256 (KLSKR). An ATP-binding site is contributed by lysine 255.

It belongs to the class-I aminoacyl-tRNA synthetase family. Glutamate--tRNA ligase type 1 subfamily. In terms of assembly, monomer.

It is found in the cytoplasm. It catalyses the reaction tRNA(Glu) + L-glutamate + ATP = L-glutamyl-tRNA(Glu) + AMP + diphosphate. Catalyzes the attachment of glutamate to tRNA(Glu) in a two-step reaction: glutamate is first activated by ATP to form Glu-AMP and then transferred to the acceptor end of tRNA(Glu). This chain is Glutamate--tRNA ligase, found in Staphylococcus saprophyticus subsp. saprophyticus (strain ATCC 15305 / DSM 20229 / NCIMB 8711 / NCTC 7292 / S-41).